A 94-amino-acid polypeptide reads, in one-letter code: Small ribosomal subunit protein bS20 (94 aa).

Residues 1 to 10 show a composition bias toward basic and acidic residues; it reads MANHASADKR. The segment at 1–20 is disordered; that stretch reads MANHASADKRNRQRITRTAR. Positions 11–20 are enriched in basic residues; the sequence is NRQRITRTAR.

It belongs to the bacterial ribosomal protein bS20 family.

Its function is as follows. Binds directly to 16S ribosomal RNA. In Sorangium cellulosum (strain So ce56) (Polyangium cellulosum (strain So ce56)), this protein is Small ribosomal subunit protein bS20.